Reading from the N-terminus, the 504-residue chain is Ribosomal protein uS12 methylthiotransferase RimO (504 aa).

The MTTase N-terminal domain maps to 19-135 (KKVGFVSLGC…ILAASGIEPR (117 aa)). 6 residues coordinate [4Fe-4S] cluster: C28, C64, C98, C214, C218, and C221. Positions 200–430 (ATPKYMAYIK…MSLQKQISKK (231 aa)) constitute a Radical SAM core domain. The TRAM domain occupies 433-504 (KALIGREFDV…HDYDLVARLL (72 aa)).

It belongs to the methylthiotransferase family. RimO subfamily. Requires [4Fe-4S] cluster as cofactor.

The protein localises to the cytoplasm. It carries out the reaction L-aspartate(89)-[ribosomal protein uS12]-hydrogen + (sulfur carrier)-SH + AH2 + 2 S-adenosyl-L-methionine = 3-methylsulfanyl-L-aspartate(89)-[ribosomal protein uS12]-hydrogen + (sulfur carrier)-H + 5'-deoxyadenosine + L-methionine + A + S-adenosyl-L-homocysteine + 2 H(+). In terms of biological role, catalyzes the methylthiolation of an aspartic acid residue of ribosomal protein uS12. This chain is Ribosomal protein uS12 methylthiotransferase RimO, found in Koribacter versatilis (strain Ellin345).